A 376-amino-acid polypeptide reads, in one-letter code: Putative glutamate--cysteine ligase 2 (376 aa).

The protein belongs to the glutamate--cysteine ligase type 2 family. YbdK subfamily.

It carries out the reaction L-cysteine + L-glutamate + ATP = gamma-L-glutamyl-L-cysteine + ADP + phosphate + H(+). In terms of biological role, ATP-dependent carboxylate-amine ligase which exhibits weak glutamate--cysteine ligase activity. This chain is Putative glutamate--cysteine ligase 2, found in Mycolicibacterium paratuberculosis (strain ATCC BAA-968 / K-10) (Mycobacterium paratuberculosis).